Consider the following 410-residue polypeptide: Succinyl-CoA:(R)-benzylsuccinate CoA-transferase subunit BbsE (410 aa).

Belongs to the CoA-transferase III family. As to quaternary structure, heterotetramer composed of 2 BbsE subunits and 2 BbsF subunits.

The catalysed reaction is (R)-2-benzylsuccinate + succinyl-CoA = (R)-2-benzylsuccinyl-CoA + succinate. Its pathway is xenobiotic degradation; toluene degradation. Inhibited by (S)-benzylsuccinyl-CoA. Its function is as follows. Catalyzes the reversible conversion of (R)-2-benzylsuccinate to (R)-2-benzylsuccinyl-CoA. Inactive with (S)-benzylsuccinate. The protein is Succinyl-CoA:(R)-benzylsuccinate CoA-transferase subunit BbsE (bbsE) of Thauera aromatica.